The following is a 306-amino-acid chain: UDP-3-O-acyl-N-acetylglucosamine deacetylase (306 aa).

3 residues coordinate Zn(2+): His-79, His-238, and Asp-242. The active-site Proton donor is His-265.

This sequence belongs to the LpxC family. It depends on Zn(2+) as a cofactor.

It catalyses the reaction a UDP-3-O-[(3R)-3-hydroxyacyl]-N-acetyl-alpha-D-glucosamine + H2O = a UDP-3-O-[(3R)-3-hydroxyacyl]-alpha-D-glucosamine + acetate. It participates in glycolipid biosynthesis; lipid IV(A) biosynthesis; lipid IV(A) from (3R)-3-hydroxytetradecanoyl-[acyl-carrier-protein] and UDP-N-acetyl-alpha-D-glucosamine: step 2/6. Its function is as follows. Catalyzes the hydrolysis of UDP-3-O-myristoyl-N-acetylglucosamine to form UDP-3-O-myristoylglucosamine and acetate, the committed step in lipid A biosynthesis. The sequence is that of UDP-3-O-acyl-N-acetylglucosamine deacetylase from Shewanella sp. (strain ANA-3).